Consider the following 175-residue polypeptide: ATP synthase subunit d, mitochondrial (175 aa).

S2 is subject to N-acetylserine.

This sequence belongs to the ATPase d subunit family.

Its subcellular location is the mitochondrion inner membrane. Its function is as follows. Mitochondrial membrane ATP synthase (F(1)F(0) ATP synthase or Complex V) produces ATP from ADP in the presence of a proton gradient across the membrane which is generated by electron transport complexes of the respiratory chain. F-type ATPases consist of two structural domains, F(1) - containing the extramembraneous catalytic core, and F(0) - containing the membrane proton channel, linked together by a central stalk and a peripheral stalk. During catalysis, ATP synthesis in the catalytic domain of F(1) is coupled via a rotary mechanism of the central stalk subunits to proton translocation. Part of the complex F(0) domain and the peripheric stalk, which acts as a stator to hold the catalytic alpha(3)beta(3) subcomplex and subunit a/ATP6 static relative to the rotary elements. The protein is ATP synthase subunit d, mitochondrial (atp7) of Schizosaccharomyces pombe (strain 972 / ATCC 24843) (Fission yeast).